We begin with the raw amino-acid sequence, 178 residues long: Protein GrpE (178 aa).

Polar residues predominate over residues 1 to 11 (MENTQENPTDQ). Residues 1-31 (MENTQENPTDQTTEETGREAQAAENAAPAAE) form a disordered region. The segment covering 19-31 (EAQAAENAAPAAE) has biased composition (low complexity).

Belongs to the GrpE family. As to quaternary structure, homodimer.

It is found in the cytoplasm. Participates actively in the response to hyperosmotic and heat shock by preventing the aggregation of stress-denatured proteins, in association with DnaK and GrpE. It is the nucleotide exchange factor for DnaK and may function as a thermosensor. Unfolded proteins bind initially to DnaJ; upon interaction with the DnaJ-bound protein, DnaK hydrolyzes its bound ATP, resulting in the formation of a stable complex. GrpE releases ADP from DnaK; ATP binding to DnaK triggers the release of the substrate protein, thus completing the reaction cycle. Several rounds of ATP-dependent interactions between DnaJ, DnaK and GrpE are required for fully efficient folding. This chain is Protein GrpE, found in Burkholderia thailandensis (strain ATCC 700388 / DSM 13276 / CCUG 48851 / CIP 106301 / E264).